The sequence spans 251 residues: Octanoyltransferase (251 aa).

The 223-residue stretch at A29–P251 folds into the BPL/LPL catalytic domain. R68–H75 is a substrate binding site. The disordered stretch occupies residues A137–D174. Substrate contacts are provided by residues A184–G186 and G197–A199. Residue C215 is the Acyl-thioester intermediate of the active site.

Belongs to the LipB family.

The protein resides in the cytoplasm. It carries out the reaction octanoyl-[ACP] + L-lysyl-[protein] = N(6)-octanoyl-L-lysyl-[protein] + holo-[ACP] + H(+). Its pathway is protein modification; protein lipoylation via endogenous pathway; protein N(6)-(lipoyl)lysine from octanoyl-[acyl-carrier-protein]: step 1/2. Functionally, catalyzes the transfer of endogenously produced octanoic acid from octanoyl-acyl-carrier-protein onto the lipoyl domains of lipoate-dependent enzymes. Lipoyl-ACP can also act as a substrate although octanoyl-ACP is likely to be the physiological substrate. The polypeptide is Octanoyltransferase (Polaromonas sp. (strain JS666 / ATCC BAA-500)).